Consider the following 403-residue polypeptide: D-galactonate dehydratase family member Mmwyl1_0037 (403 aa).

2 residues coordinate substrate: N37 and H122. Y159 functions as the Proton donor/acceptor in the catalytic mechanism. D211 is a Mg(2+) binding site. The active-site Proton donor/acceptor is the H213. Mg(2+)-binding residues include E237 and E263. Positions 263, 284, 313, 317, and 340 each coordinate substrate.

This sequence belongs to the mandelate racemase/muconate lactonizing enzyme family. GalD subfamily. Requires Mg(2+) as cofactor.

The enzyme catalyses D-mannonate = 2-dehydro-3-deoxy-D-gluconate + H2O. Has low D-mannonate dehydratase activity (in vitro), suggesting that this is not a physiological substrate and that it has no significant role in D-mannonate degradation in vivo. Has no detectable activity with a panel of 70 other acid sugars (in vitro). The polypeptide is D-galactonate dehydratase family member Mmwyl1_0037 (Marinomonas sp. (strain MWYL1)).